Here is a 103-residue protein sequence, read N- to C-terminus: Histone H4 (103 aa).

Positions 1–14 are enriched in gly residues; sequence MTGRGKGGKGLGKG. The disordered stretch occupies residues 1 to 20; it reads MTGRGKGGKGLGKGGAKRHR. N6-acetyl-N6-methyllysine; alternate is present on residues Lys6 and Lys13. Residues 17 to 21 mediate DNA binding; it reads KRHRK.

This sequence belongs to the histone H4 family. In terms of assembly, the nucleosome is a histone octamer containing two molecules each of H2A, H2B, H3 and H4 assembled in one H3-H4 heterotetramer and two H2A-H2B heterodimers. The octamer wraps approximately 147 bp of DNA.

The protein resides in the nucleus. It is found in the chromosome. Functionally, core component of nucleosome. Nucleosomes wrap and compact DNA into chromatin, limiting DNA accessibility to the cellular machineries which require DNA as a template. Histones thereby play a central role in transcription regulation, DNA repair, DNA replication and chromosomal stability. DNA accessibility is regulated via a complex set of post-translational modifications of histones, also called histone code, and nucleosome remodeling. The protein is Histone H4 of Trichogramma cacaeciae (Moth egg parasite).